A 284-amino-acid chain; its full sequence is Pantothenate synthetase (284 aa).

30-37 contacts ATP; that stretch reads MGNLHDGH. Catalysis depends on histidine 37, which acts as the Proton donor. Glutamine 61 provides a ligand contact to (R)-pantoate. Position 61 (glutamine 61) interacts with beta-alanine. 149–152 lines the ATP pocket; that stretch reads GEKD. Glutamine 155 contributes to the (R)-pantoate binding site. ATP is bound by residues isoleucine 178 and 186–189; that span reads LSSR.

This sequence belongs to the pantothenate synthetase family. In terms of assembly, homodimer.

The protein resides in the cytoplasm. It carries out the reaction (R)-pantoate + beta-alanine + ATP = (R)-pantothenate + AMP + diphosphate + H(+). It functions in the pathway cofactor biosynthesis; (R)-pantothenate biosynthesis; (R)-pantothenate from (R)-pantoate and beta-alanine: step 1/1. In terms of biological role, catalyzes the condensation of pantoate with beta-alanine in an ATP-dependent reaction via a pantoyl-adenylate intermediate. In Salmonella newport (strain SL254), this protein is Pantothenate synthetase.